We begin with the raw amino-acid sequence, 1355 residues long: DNA-directed RNA polymerase subunit beta' (1355 aa).

C219, C293, C300, and C303 together coordinate Zn(2+). Residues 1331-1355 are disordered; it reads AEVEVDDEVDDDYEDDDEDDDDYED.

This sequence belongs to the RNA polymerase beta' chain family. RpoC2 subfamily. In cyanobacteria the RNAP catalytic core is composed of 2 alpha, 1 beta, 1 beta', 1 gamma and 1 omega subunit. When a sigma factor is associated with the core the holoenzyme is formed, which can initiate transcription. Requires Zn(2+) as cofactor.

It catalyses the reaction RNA(n) + a ribonucleoside 5'-triphosphate = RNA(n+1) + diphosphate. Its function is as follows. DNA-dependent RNA polymerase catalyzes the transcription of DNA into RNA using the four ribonucleoside triphosphates as substrates. The chain is DNA-directed RNA polymerase subunit beta' from Nostoc sp. (strain PCC 7120 / SAG 25.82 / UTEX 2576).